A 414-amino-acid chain; its full sequence is Esterase FrsA (414 aa).

The protein belongs to the FrsA family.

It catalyses the reaction a carboxylic ester + H2O = an alcohol + a carboxylate + H(+). Its function is as follows. Catalyzes the hydrolysis of esters. In Salmonella typhi, this protein is Esterase FrsA.